A 205-amino-acid chain; its full sequence is Holliday junction branch migration complex subunit RuvA (205 aa).

The domain I stretch occupies residues M1–N64. A domain II region spans residues D65–T143. The segment at G144–I156 is flexible linker. A domain III region spans residues S157 to L205.

The protein belongs to the RuvA family. As to quaternary structure, homotetramer. Forms an RuvA(8)-RuvB(12)-Holliday junction (HJ) complex. HJ DNA is sandwiched between 2 RuvA tetramers; dsDNA enters through RuvA and exits via RuvB. An RuvB hexamer assembles on each DNA strand where it exits the tetramer. Each RuvB hexamer is contacted by two RuvA subunits (via domain III) on 2 adjacent RuvB subunits; this complex drives branch migration. In the full resolvosome a probable DNA-RuvA(4)-RuvB(12)-RuvC(2) complex forms which resolves the HJ.

Its subcellular location is the cytoplasm. Functionally, the RuvA-RuvB-RuvC complex processes Holliday junction (HJ) DNA during genetic recombination and DNA repair, while the RuvA-RuvB complex plays an important role in the rescue of blocked DNA replication forks via replication fork reversal (RFR). RuvA specifically binds to HJ cruciform DNA, conferring on it an open structure. The RuvB hexamer acts as an ATP-dependent pump, pulling dsDNA into and through the RuvAB complex. HJ branch migration allows RuvC to scan DNA until it finds its consensus sequence, where it cleaves and resolves the cruciform DNA. The protein is Holliday junction branch migration complex subunit RuvA of Yersinia enterocolitica serotype O:8 / biotype 1B (strain NCTC 13174 / 8081).